Consider the following 412-residue polypeptide: Cysteate synthase (412 aa).

An N6-(pyridoxal phosphate)lysine modification is found at K105. Residues N131 and T382 each coordinate pyridoxal 5'-phosphate.

The protein belongs to the threonine synthase family. Cysteate synthase subfamily. As to quaternary structure, homotrimer. It depends on pyridoxal 5'-phosphate as a cofactor.

The catalysed reaction is O-phospho-L-serine + sulfite + H(+) = L-cysteate + phosphate. The protein operates within cofactor biosynthesis; coenzyme M biosynthesis. In terms of biological role, specifically catalyzes the beta-elimination of phosphate from L-phosphoserine and the beta-addition of sulfite to the dehydroalanine intermediate to produce L-cysteate. The polypeptide is Cysteate synthase (Methanocorpusculum labreanum (strain ATCC 43576 / DSM 4855 / Z)).